Here is a 609-residue protein sequence, read N- to C-terminus: Zinc metalloproteinase/disintegrin-like HR1a (609 aa).

Positions 1–20 are cleaved as a signal peptide; that stretch reads MIQVLLVTICLAVFPYQGSS. Positions 21–190 are excised as a propeptide; it reads IILGSGNVND…KKASKLVVTA (170 aa). Residues 200-396 enclose the Peptidase M12B domain; that stretch reads RFIELVIVAD…DEPQCILNEP (197 aa). Ca(2+)-binding residues include glutamate 203 and aspartate 287. A glycan (N-linked (GlcNAc...) asparagine) is linked at asparagine 298. Cystine bridges form between cysteine 311/cysteine 391, cysteine 351/cysteine 375, and cysteine 353/cysteine 358. Residue histidine 336 participates in Zn(2+) binding. The active site involves glutamate 337. Histidine 340 and histidine 346 together coordinate Zn(2+). A glycan (N-linked (GlcNAc...) asparagine) is linked at asparagine 350. A glycan (N-linked (GlcNAc...) asparagine) is linked at asparagine 374. Ca(2+)-binding residues include cysteine 391 and asparagine 394. A propeptide spanning residues 397-400 is cleaved from the precursor; the sequence is LRTD. The Disintegrin domain maps to 404–490; it reads PPVCGNELLE…DCPTDRFHRN (87 aa). Positions 406, 409, 411, 413, 416, and 419 each coordinate Ca(2+). 22 cysteine pairs are disulfide-bonded: cysteine 407/cysteine 426, cysteine 407/cysteine 436, cysteine 418/cysteine 431, cysteine 418/cysteine 436, cysteine 420/cysteine 426, cysteine 430/cysteine 453, cysteine 444/cysteine 450, cysteine 449/cysteine 475, cysteine 462/cysteine 482, cysteine 469/cysteine 494, cysteine 469/cysteine 501, cysteine 494/cysteine 506, cysteine 501/cysteine 506, cysteine 513/cysteine 528, cysteine 513/cysteine 563, cysteine 528/cysteine 571, cysteine 541/cysteine 551, cysteine 551/cysteine 558, cysteine 558/cysteine 597, cysteine 563/cysteine 571, cysteine 591/cysteine 602, and cysteine 597/cysteine 602. Positions 468 to 470 match the D/ECD-tripeptide motif; sequence ECD. Residues aspartate 470, glutamate 473, and aspartate 485 each coordinate Ca(2+). N-linked (GlcNAc...) asparagine glycosylation occurs at asparagine 520.

The protein belongs to the venom metalloproteinase (M12B) family. P-III subfamily. P-IIIb sub-subfamily. In terms of assembly, monomer. It depends on Zn(2+) as a cofactor. In terms of tissue distribution, expressed by the venom gland.

It localises to the secreted. Its function is as follows. Zinc protease that induces hemorrhage and has proteolytic activity. Has preference for Ala, His, Pro, Met, and Tyr at the P1 position, in descending order (in vitro). Predominantly prefers Val and Asp at the P3 and P2 positions, respectively. Inhibits platelet aggregation induced by ADP, thrombin, platelet-activating factor and collagen. Acts by inhibiting fibrinogen interaction with platelet receptors alpha-IIb/beta-3 (ITGA2B/ITGB3). This chain is Zinc metalloproteinase/disintegrin-like HR1a, found in Protobothrops flavoviridis (Habu).